The following is a 543-amino-acid chain: Hydroxylamine reductase (543 aa).

Cys3, Cys6, Cys15, and Cys21 together coordinate [4Fe-4S] cluster. Residues His244, Glu268, Cys312, Cys399, Cys427, Cys452, Glu486, and Lys488 each coordinate hybrid [4Fe-2O-2S] cluster. At Cys399 the chain carries Cysteine persulfide.

The protein belongs to the HCP family. The cofactor is [4Fe-4S] cluster. Hybrid [4Fe-2O-2S] cluster is required as a cofactor.

The protein localises to the cytoplasm. It carries out the reaction A + NH4(+) + H2O = hydroxylamine + AH2 + H(+). Functionally, catalyzes the reduction of hydroxylamine to form NH(3) and H(2)O. The protein is Hydroxylamine reductase of Methanocella arvoryzae (strain DSM 22066 / NBRC 105507 / MRE50).